We begin with the raw amino-acid sequence, 484 residues long: 1,4-beta-D-glucan cellobiohydrolase CEL6A (484 aa).

The signal sequence occupies residues 1–17; that stretch reads MAKRLLLTAALAATTLA. In terms of domain architecture, CBM1 spans 26–62; that stretch reads NCGSVWSQCGGQGWTGATCCASGSTCVAQNQWYSQCL. 2 disulfide bridges follow: C34–C51 and C45–C61. Residues 68 to 98 form a disordered region; the sequence is TTTAQAPSSTRTTTSSSSRPTSSSISTSAVN. Substrate-binding residues include W171 and D173. N175 carries an N-linked (GlcNAc...) asparagine glycan. The tract at residues 208–230 is substrate binding loop 1; that stretch reads YDLPDRDCAAAASNGEWAIADGG. The Proton donor role is filled by D260. Substrate contacts are provided by H305, W308, N344, W405, K433, and E437. The tract at residues 431–469 is substrate binding loop 2; it reads WIKPGGECDGTSDTTAARYDHHCGFADALKPAPEAGQWF. D439 functions as the Proton acceptor in the catalytic mechanism.

It belongs to the glycosyl hydrolase 6 (cellulase B) family. In terms of assembly, monomer. Post-translationally, both N- and O-glycosylated.

The protein resides in the secreted. The enzyme catalyses Hydrolysis of (1-&gt;4)-beta-D-glucosidic linkages in cellulose and cellotetraose, releasing cellobiose from the non-reducing ends of the chains.. Exoglucanase that plays an important function in biomass degradation by catalyzing the hydrolysis of the non-reducing end beta-1,4-glucosidic linkages in cellulose and cellotetraose to release cellobiose. Hydrolyzes crystalline and amorphous cellulose but is inactive on hydroxyethyl cellulose, mannan, galactomannan, xyloglucan, arabinoxylan, arabinan, xylan, and pectin. The polypeptide is 1,4-beta-D-glucan cellobiohydrolase CEL6A (Podospora anserina (strain S / ATCC MYA-4624 / DSM 980 / FGSC 10383) (Pleurage anserina)).